Consider the following 168-residue polypeptide: Profilin-3 (168 aa).

The interval 14 to 36 (LSLEHSDKPQRRSRAKVKKKKKT) is disordered. Residues 24-36 (RRSRAKVKKKKKT) are compositionally biased toward basic residues.

It belongs to the profilin family. In terms of assembly, occurs in many kinds of cells as a complex with monomeric actin in a 1:1 ratio. Binding to the poly-proline motif of formins induces formation of oligomers through the N-terminal hydrophobic residues of PRF3. As to expression, expressed in roots, rosette leaves, cauline leaves, stems and flowers.

The protein resides in the cytoplasm. It localises to the cytoskeleton. In terms of biological role, binds to actin monomers and regulates the organization of the actin cytoskeleton. Can increase the critical concentration (Cc) of actin assembly in vitro. Acts as a downstream effector of the hydrogen sulfide signaling to regulate the assembly and depolymerization of F-actin. At high concentrations, profilin prevents the polymerization of actin, whereas it enhances it at low concentrations. Binding to the poly-proline motif of formin induces oligomerization of PRF3. PRF3 oligomers inhibit formin-mediated actin assembly to modulate plant immunity triggered by pathogen-associated molecular patterns (PAMPs). The sequence is that of Profilin-3 from Arabidopsis thaliana (Mouse-ear cress).